The primary structure comprises 901 residues: Protein translocase subunit SecA (901 aa).

ATP is bound by residues Gln-87, 105–109, and Asp-512; that span reads GEGKT. Cys-885, Cys-887, Cys-896, and His-897 together coordinate Zn(2+).

This sequence belongs to the SecA family. Monomer and homodimer. Part of the essential Sec protein translocation apparatus which comprises SecA, SecYEG and auxiliary proteins SecDF-YajC and YidC. Zn(2+) serves as cofactor.

The protein localises to the cell inner membrane. It is found in the cytoplasm. The catalysed reaction is ATP + H2O + cellular proteinSide 1 = ADP + phosphate + cellular proteinSide 2.. In terms of biological role, part of the Sec protein translocase complex. Interacts with the SecYEG preprotein conducting channel. Has a central role in coupling the hydrolysis of ATP to the transfer of proteins into and across the cell membrane, serving both as a receptor for the preprotein-SecB complex and as an ATP-driven molecular motor driving the stepwise translocation of polypeptide chains across the membrane. The chain is Protein translocase subunit SecA from Salmonella arizonae (strain ATCC BAA-731 / CDC346-86 / RSK2980).